The chain runs to 391 residues: Flagellin (391 aa).

It belongs to the bacterial flagellin family.

The protein localises to the secreted. It is found in the bacterial flagellum. Functionally, flagellin is the subunit protein which polymerizes to form the filaments of bacterial flagella. This Bordetella bronchiseptica (strain ATCC BAA-588 / NCTC 13252 / RB50) (Alcaligenes bronchisepticus) protein is Flagellin (flaA).